A 307-amino-acid chain; its full sequence is tRNA dimethylallyltransferase (307 aa).

6-13 (GATATGKT) is an ATP binding site. 8–13 (TATGKT) serves as a coordination point for substrate. The segment at 31–34 (DSMM) is interaction with substrate tRNA.

The protein belongs to the IPP transferase family. In terms of assembly, monomer. Mg(2+) is required as a cofactor.

It catalyses the reaction adenosine(37) in tRNA + dimethylallyl diphosphate = N(6)-dimethylallyladenosine(37) in tRNA + diphosphate. Its function is as follows. Catalyzes the transfer of a dimethylallyl group onto the adenine at position 37 in tRNAs that read codons beginning with uridine, leading to the formation of N6-(dimethylallyl)adenosine (i(6)A). The protein is tRNA dimethylallyltransferase of Sulfurihydrogenibium sp. (strain YO3AOP1).